The primary structure comprises 226 residues: Protein pdh1 (226 aa).

The N-terminal stretch at 1–26 is a signal peptide; sequence MNHFSKFSVTKRLLILEVLFSAISFG. The Extracellular segment spans residues 27–41; sequence ISIYIKVFGRSSIVT. The chain crosses the membrane as a helical span at residues 42–62; it reads FFLLCFHLVPNALFLFPWTII. The Cytoplasmic portion of the chain corresponds to 63–65; the sequence is TTS. A helical membrane pass occupies residues 66–86; sequence FVDANVFTLLSSILILSVYGV. Residues 87-97 are Extracellular-facing; the sequence is EIERSWGHKEY. The helical transmembrane segment at 98 to 118 threads the bilayer; sequence LLFCQFLTVIPNIAVLIPCFI. Over 119 to 191 the chain is Cytoplasmic; the sequence is AYKITDSHYL…VFQSFPWTYF (73 aa). Residues 192-212 form a helical membrane-spanning segment; it reads CLAVSGTCISELYVLFVHPVV. Over 213–226 the chain is Extracellular; it reads QELFHLESHTQLPI.

The protein resides in the membrane. This chain is Protein pdh1 (pdh1), found in Schizosaccharomyces pombe (strain 972 / ATCC 24843) (Fission yeast).